Reading from the N-terminus, the 330-residue chain is Glycerol-3-phosphate dehydrogenase [NAD(P)+] (330 aa).

Residues S10, W11, R31, and K104 each contribute to the NADPH site. Sn-glycerol 3-phosphate-binding residues include K104, G131, and S133. A135 contacts NADPH. K186, D239, S249, R250, and N251 together coordinate sn-glycerol 3-phosphate. K186 acts as the Proton acceptor in catalysis. Position 250 (R250) interacts with NADPH. The NADPH site is built by V274 and E276.

This sequence belongs to the NAD-dependent glycerol-3-phosphate dehydrogenase family.

Its subcellular location is the cytoplasm. It catalyses the reaction sn-glycerol 3-phosphate + NAD(+) = dihydroxyacetone phosphate + NADH + H(+). It carries out the reaction sn-glycerol 3-phosphate + NADP(+) = dihydroxyacetone phosphate + NADPH + H(+). It participates in membrane lipid metabolism; glycerophospholipid metabolism. Functionally, catalyzes the reduction of the glycolytic intermediate dihydroxyacetone phosphate (DHAP) to sn-glycerol 3-phosphate (G3P), the key precursor for phospholipid synthesis. The chain is Glycerol-3-phosphate dehydrogenase [NAD(P)+] from Thermoanaerobacter sp. (strain X514).